A 206-amino-acid polypeptide reads, in one-letter code: Probable thymidylate kinase (206 aa).

Residue 10-17 participates in ATP binding; it reads GIDGSGKS.

Belongs to the thymidylate kinase family.

It catalyses the reaction dTMP + ATP = dTDP + ADP. In Methanosarcina acetivorans (strain ATCC 35395 / DSM 2834 / JCM 12185 / C2A), this protein is Probable thymidylate kinase.